Reading from the N-terminus, the 99-residue chain is Large ribosomal subunit protein uL23 (99 aa).

Belongs to the universal ribosomal protein uL23 family. As to quaternary structure, part of the 50S ribosomal subunit. Contacts protein L29, and trigger factor when it is bound to the ribosome.

Its function is as follows. One of the early assembly proteins it binds 23S rRNA. One of the proteins that surrounds the polypeptide exit tunnel on the outside of the ribosome. Forms the main docking site for trigger factor binding to the ribosome. This Stenotrophomonas maltophilia (strain R551-3) protein is Large ribosomal subunit protein uL23.